The primary structure comprises 308 residues: Ornithine carbamoyltransferase (308 aa).

Carbamoyl phosphate contacts are provided by residues 53–56, Q80, R104, and 131–134; these read STRT and HPCQ. L-ornithine is bound by residues N162, D225, and 229 to 230; that span reads SM. Residues 265-266 and R293 contribute to the carbamoyl phosphate site; that span reads CL.

Belongs to the aspartate/ornithine carbamoyltransferase superfamily. OTCase family.

The protein localises to the cytoplasm. It catalyses the reaction carbamoyl phosphate + L-ornithine = L-citrulline + phosphate + H(+). Its pathway is amino-acid biosynthesis; L-arginine biosynthesis; L-arginine from L-ornithine and carbamoyl phosphate: step 1/3. Reversibly catalyzes the transfer of the carbamoyl group from carbamoyl phosphate (CP) to the N(epsilon) atom of ornithine (ORN) to produce L-citrulline. The polypeptide is Ornithine carbamoyltransferase (argF) (Synechocystis sp. (strain ATCC 27184 / PCC 6803 / Kazusa)).